Here is a 175-residue protein sequence, read N- to C-terminus: Inorganic pyrophosphatase (175 aa).

Substrate-binding residues include Lys30, Arg44, and Tyr56. Positions 66, 71, and 103 each coordinate Mg(2+). A substrate-binding site is contributed by Tyr142.

It belongs to the PPase family. In terms of assembly, homohexamer. Requires Mg(2+) as cofactor.

It is found in the cytoplasm. The enzyme catalyses diphosphate + H2O = 2 phosphate + H(+). Its function is as follows. Catalyzes the hydrolysis of inorganic pyrophosphate (PPi) forming two phosphate ions. This chain is Inorganic pyrophosphatase, found in Pseudomonas aeruginosa (strain ATCC 15692 / DSM 22644 / CIP 104116 / JCM 14847 / LMG 12228 / 1C / PRS 101 / PAO1).